We begin with the raw amino-acid sequence, 253 residues long: POU Class 2 homeobox-associating factor 3 (253 aa).

An OCA domain is found at 5–27; sequence PKVYQGVRVKMTVKELLQQRRAH.

Belongs to the POU2AF family. Interacts with POU2F3 in a DNA-dependent manner; this interaction increases POU2F3 transactivation activity. In terms of tissue distribution, expressed in tuft cells.

It localises to the cytoplasm. The protein localises to the nucleus. Transcriptional coactivator that specifically associates with POU2F3. This complex drives the development of tuft cells, a rare a rare chemosensory cells that coordinate immune and neural functions within mucosal epithelial tissues. The chain is POU Class 2 homeobox-associating factor 3 from Mus musculus (Mouse).